A 189-amino-acid polypeptide reads, in one-letter code: Penicillin-binding protein activator LpoB (189 aa).

Positions 1–16 are cleaved as a signal peptide; sequence MRRILFVALSVMFLAG. C17 carries the N-palmitoyl cysteine lipid modification. A lipid anchor (S-diacylglycerol cysteine) is attached at C17. The interval 18 to 52 is disordered; the sequence is PSLPPEQPEPPTPVVPVTPSEKPTPPSEKVPEPPK. Residues 19-45 are compositionally biased toward pro residues; it reads SLPPEQPEPPTPVVPVTPSEKPTPPSE.

It belongs to the LpoB family. As to quaternary structure, interacts with PBP1b.

The protein localises to the cell outer membrane. Functionally, regulator of peptidoglycan synthesis that is essential for the function of penicillin-binding protein 1B (PBP1b). The polypeptide is Penicillin-binding protein activator LpoB (Photorhabdus laumondii subsp. laumondii (strain DSM 15139 / CIP 105565 / TT01) (Photorhabdus luminescens subsp. laumondii)).